A 221-amino-acid polypeptide reads, in one-letter code: GTP cyclohydrolase 1 (221 aa).

Positions 109, 112, and 180 each coordinate Zn(2+).

It belongs to the GTP cyclohydrolase I family. In terms of assembly, toroid-shaped homodecamer, composed of two pentamers of five dimers.

The enzyme catalyses GTP + H2O = 7,8-dihydroneopterin 3'-triphosphate + formate + H(+). It functions in the pathway cofactor biosynthesis; 7,8-dihydroneopterin triphosphate biosynthesis; 7,8-dihydroneopterin triphosphate from GTP: step 1/1. This is GTP cyclohydrolase 1 from Sodalis glossinidius (strain morsitans).